The following is a 433-amino-acid chain: Tubulin epsilon and delta complex protein 2 (433 aa).

Disordered regions lie at residues 45 to 69 (TGTR…ACTP), 95 to 169 (TKAG…VGMG), and 326 to 345 (QPPR…SCGG). Residues 107–120 (KSRSIVTSSGTTAS) show a composition bias toward polar residues. Ser-159 carries the post-translational modification Phosphoserine. Residues 327 to 339 (PPRPCPVGRPPGA) show a composition bias toward pro residues.

As to quaternary structure, interacts with TEDC1. Found in a complex with TEDC1, TEDC2, TUBE1 and TUBD1.

Its subcellular location is the cell projection. The protein resides in the cilium. The protein localises to the cytoplasm. It localises to the cytoskeleton. It is found in the microtubule organizing center. Its subcellular location is the centrosome. The protein resides in the centriole. Functionally, acts as a positive regulator of ciliary hedgehog signaling. Required for centriole stability. The polypeptide is Tubulin epsilon and delta complex protein 2 (Homo sapiens (Human)).